A 180-amino-acid chain; its full sequence is Small ribosomal subunit protein uS4 (180 aa).

The S4 RNA-binding domain maps to 103–165; it reads RRLQTLVYKK…KNSPFAKESH (63 aa).

It belongs to the universal ribosomal protein uS4 family. Part of the 30S ribosomal subunit. Contacts protein S5. The interaction surface between S4 and S5 is involved in control of translational fidelity.

Its function is as follows. One of the primary rRNA binding proteins, it binds directly to 16S rRNA where it nucleates assembly of the body of the 30S subunit. In terms of biological role, with S5 and S12 plays an important role in translational accuracy. This chain is Small ribosomal subunit protein uS4, found in Thermococcus gammatolerans (strain DSM 15229 / JCM 11827 / EJ3).